A 152-amino-acid chain; its full sequence is 3-hydroxyacyl-[acyl-carrier-protein] dehydratase FabZ (152 aa).

The active site involves H58.

This sequence belongs to the thioester dehydratase family. FabZ subfamily.

Its subcellular location is the cytoplasm. It carries out the reaction a (3R)-hydroxyacyl-[ACP] = a (2E)-enoyl-[ACP] + H2O. Involved in unsaturated fatty acids biosynthesis. Catalyzes the dehydration of short chain beta-hydroxyacyl-ACPs and long chain saturated and unsaturated beta-hydroxyacyl-ACPs. The protein is 3-hydroxyacyl-[acyl-carrier-protein] dehydratase FabZ of Prochlorococcus marinus (strain MIT 9301).